The primary structure comprises 71 residues: Sec-independent protein translocase protein TatA (71 aa).

A helical transmembrane segment spans residues 1 to 21; that stretch reads MGSFSIWHWLIVLVIVALIFG. The disordered stretch occupies residues 48-71; that stretch reads ADKTEQVTQQQTTIDVQAKEKQNS.

Belongs to the TatA/E family. In terms of assembly, the Tat system comprises two distinct complexes: a TatABC complex, containing multiple copies of TatA, TatB and TatC subunits, and a separate TatA complex, containing only TatA subunits. Substrates initially bind to the TatABC complex, which probably triggers association of the separate TatA complex to form the active translocon.

Its subcellular location is the cell inner membrane. Functionally, part of the twin-arginine translocation (Tat) system that transports large folded proteins containing a characteristic twin-arginine motif in their signal peptide across membranes. TatA could form the protein-conducting channel of the Tat system. This Bordetella avium (strain 197N) protein is Sec-independent protein translocase protein TatA.